A 128-amino-acid chain; its full sequence is MRSEKHLLPLPPLLAICCLGTLHLSSGFPQSVPSYLEGLDIPESEIPSFVMDLCSSIYNRMKVNEENNHEIYKRFLFQFSRAKDPSLKIGESQIATAEYTKRDSSGIVGRPFFLFRPRNGRKVSINEH.

A signal peptide spans methionine 1–glycine 27. 2 consecutive propeptides follow at residues phenylalanine 28–tyrosine 72 and phenylalanine 75–threonine 100. At asparagine 119 the chain carries Asparagine amide. The propeptide occupies valine 123–histidine 128.

This sequence belongs to the NmU family. In terms of tissue distribution, expressed by the skin glands.

The protein localises to the secreted. Its function is as follows. Neuromedin-S-17: stimulates uterine smooth muscle contraction (B similarity). Synthetic peptide NmS-17 induces calcium mobilization in CHO cells transfected with either human FM-3/GPR66 (EC(50)=0.085 nM) or FM-4/TGR-1 (EC(50)=0.231 nM) NmU/NmS receptors. This chain is Neuromedin-S (nms), found in Bombina variegata (Yellow-bellied toad).